The chain runs to 58 residues: Gigasin-4 (58 aa).

In terms of tissue distribution, component of the organic matrix of calcified shell layers.

The protein is Gigasin-4 of Magallana gigas (Pacific oyster).